The following is a 343-amino-acid chain: Holliday junction branch migration complex subunit RuvB (343 aa).

The large ATPase domain (RuvB-L) stretch occupies residues 1 to 185 (MMNENLDATG…FGISSRLQYY (185 aa)). Residues Leu-24, Arg-25, Gly-66, Lys-69, Thr-70, Thr-71, 132 to 134 (EDY), Arg-175, Tyr-185, and Arg-222 each bind ATP. Thr-70 serves as a coordination point for Mg(2+). The small ATPAse domain (RuvB-S) stretch occupies residues 186 to 256 (STELLSGIVE…IAKFGLKALN (71 aa)). A head domain (RuvB-H) region spans residues 259–343 (AHGLDEMDNK…GSNQGGLFDN (85 aa)). 2 residues coordinate DNA: Arg-314 and Arg-319.

It belongs to the RuvB family. In terms of assembly, homohexamer. Forms an RuvA(8)-RuvB(12)-Holliday junction (HJ) complex. HJ DNA is sandwiched between 2 RuvA tetramers; dsDNA enters through RuvA and exits via RuvB. An RuvB hexamer assembles on each DNA strand where it exits the tetramer. Each RuvB hexamer is contacted by two RuvA subunits (via domain III) on 2 adjacent RuvB subunits; this complex drives branch migration. In the full resolvosome a probable DNA-RuvA(4)-RuvB(12)-RuvC(2) complex forms which resolves the HJ.

It is found in the cytoplasm. The enzyme catalyses ATP + H2O = ADP + phosphate + H(+). Functionally, the RuvA-RuvB-RuvC complex processes Holliday junction (HJ) DNA during genetic recombination and DNA repair, while the RuvA-RuvB complex plays an important role in the rescue of blocked DNA replication forks via replication fork reversal (RFR). RuvA specifically binds to HJ cruciform DNA, conferring on it an open structure. The RuvB hexamer acts as an ATP-dependent pump, pulling dsDNA into and through the RuvAB complex. RuvB forms 2 homohexamers on either side of HJ DNA bound by 1 or 2 RuvA tetramers; 4 subunits per hexamer contact DNA at a time. Coordinated motions by a converter formed by DNA-disengaged RuvB subunits stimulates ATP hydrolysis and nucleotide exchange. Immobilization of the converter enables RuvB to convert the ATP-contained energy into a lever motion, pulling 2 nucleotides of DNA out of the RuvA tetramer per ATP hydrolyzed, thus driving DNA branch migration. The RuvB motors rotate together with the DNA substrate, which together with the progressing nucleotide cycle form the mechanistic basis for DNA recombination by continuous HJ branch migration. Branch migration allows RuvC to scan DNA until it finds its consensus sequence, where it cleaves and resolves cruciform DNA. This chain is Holliday junction branch migration complex subunit RuvB, found in Christiangramia forsetii (strain DSM 17595 / CGMCC 1.15422 / KT0803) (Gramella forsetii).